A 264-amino-acid polypeptide reads, in one-letter code: Thymidylate synthase (264 aa).

Residue R21 participates in dUMP binding. H51 contributes to the (6R)-5,10-methylene-5,6,7,8-tetrahydrofolate binding site. 126–127 lines the dUMP pocket; sequence RR. C146 functions as the Nucleophile in the catalytic mechanism. Residues 166–169, N177, and 207–209 contribute to the dUMP site; these read RSAD and HIY. D169 lines the (6R)-5,10-methylene-5,6,7,8-tetrahydrofolate pocket. Residue A263 participates in (6R)-5,10-methylene-5,6,7,8-tetrahydrofolate binding.

The protein belongs to the thymidylate synthase family. Bacterial-type ThyA subfamily. Homodimer.

It is found in the cytoplasm. It carries out the reaction dUMP + (6R)-5,10-methylene-5,6,7,8-tetrahydrofolate = 7,8-dihydrofolate + dTMP. Its pathway is pyrimidine metabolism; dTTP biosynthesis. Functionally, catalyzes the reductive methylation of 2'-deoxyuridine-5'-monophosphate (dUMP) to 2'-deoxythymidine-5'-monophosphate (dTMP) while utilizing 5,10-methylenetetrahydrofolate (mTHF) as the methyl donor and reductant in the reaction, yielding dihydrofolate (DHF) as a by-product. This enzymatic reaction provides an intracellular de novo source of dTMP, an essential precursor for DNA biosynthesis. This Brucella abortus (strain 2308) protein is Thymidylate synthase.